The sequence spans 310 residues: tRNA uridine(34) hydroxylase (310 aa).

One can recognise a Rhodanese domain in the interval K127–S225. Catalysis depends on C185, which acts as the Cysteine persulfide intermediate.

It belongs to the TrhO family.

The catalysed reaction is uridine(34) in tRNA + AH2 + O2 = 5-hydroxyuridine(34) in tRNA + A + H2O. In terms of biological role, catalyzes oxygen-dependent 5-hydroxyuridine (ho5U) modification at position 34 in tRNAs. The chain is tRNA uridine(34) hydroxylase from Prochlorococcus marinus subsp. pastoris (strain CCMP1986 / NIES-2087 / MED4).